A 346-amino-acid polypeptide reads, in one-letter code: Selenide, water dikinase (346 aa).

Residue Cys15 is part of the active site. ATP-binding positions include Lys18 and 46–48; that span reads SKD. Residue Asp49 participates in Mg(2+) binding. Residues Asp66, Asp89, and 137-139 each bind ATP; that span reads GHS. Residue Asp89 participates in Mg(2+) binding. Asp225 is a Mg(2+) binding site.

Belongs to the selenophosphate synthase 1 family. Class I subfamily. Homodimer. Mg(2+) is required as a cofactor.

It carries out the reaction hydrogenselenide + ATP + H2O = selenophosphate + AMP + phosphate + 2 H(+). Synthesizes selenophosphate from selenide and ATP. This Photobacterium profundum (strain SS9) protein is Selenide, water dikinase.